The sequence spans 1347 residues: DExH-box ATP-dependent RNA helicase DExH11 (1347 aa).

A disordered region spans residues 263–291; it reads ELEGDDHTAGSESPKAEAEPDAKASISNE. The segment covering 267-284 has biased composition (basic and acidic residues); the sequence is DDHTAGSESPKAEAEPDA. Residues 369–524 enclose the Helicase ATP-binding domain; it reads ICCLEKGESV…WIGRTKQKEI (156 aa). Residue 382–389 coordinates ATP; the sequence is AHTSAGKT. A DEVH box motif is present at residues 472–475; sequence DEVH. Residues 566–625 are disordered; the sequence is SQKKKNSNAVSVAPKQQMGSSAHQDGSKSQKHEAHSRGKQNKHSSVKDVGKSSYSGNSQN. Basic and acidic residues predominate over residues 590–601; that stretch reads DGSKSQKHEAHS. The Helicase C-terminal domain maps to 673-838; that stretch reads DLTSSSEKSE…LTYIMILHLL (166 aa).

Belongs to the DExH box helicase family. SKI2 subfamily. In terms of assembly, component of the cytoplasmic SKI complex, which consists of SKI2, SKI3 and VIP3/SKI8. As to expression, expressed in vascular tissues of leaves and roots of young plants.

It localises to the cytoplasm. The enzyme catalyses ATP + H2O = ADP + phosphate + H(+). In terms of biological role, component of the SKI complex which is thought to be involved in exosome-mediated RNA decay and associates with transcriptionally active genes in a manner dependent on PAF1 complex (PAF1C). Involved in the regulation of potassium deprivation stress response. In Arabidopsis thaliana (Mouse-ear cress), this protein is DExH-box ATP-dependent RNA helicase DExH11.